A 295-amino-acid chain; its full sequence is Ectoine dioxygenase (295 aa).

Position 129 (Gln129) interacts with L-ectoine. 2-oxoglutarate is bound at residue Lys135. His146, Asp148, and His247 together coordinate Fe cation.

The protein belongs to the PhyH family. EctD subfamily. Homodimer. Fe(2+) is required as a cofactor.

It catalyses the reaction L-ectoine + 2-oxoglutarate + O2 = 5-hydroxyectoine + succinate + CO2. In terms of biological role, involved in the biosynthesis of 5-hydroxyectoine, called compatible solute, which helps organisms to survive extreme osmotic stress by acting as a highly soluble organic osmolyte. Catalyzes the 2-oxoglutarate-dependent selective hydroxylation of L-ectoine to yield (4S,5S)-5-hydroxyectoine. In Streptomyces avermitilis (strain ATCC 31267 / DSM 46492 / JCM 5070 / NBRC 14893 / NCIMB 12804 / NRRL 8165 / MA-4680), this protein is Ectoine dioxygenase.